The primary structure comprises 179 residues: Cytochrome b6-f complex iron-sulfur subunit 1 (179 aa).

A helical transmembrane segment spans residues 21 to 43 (LLTFGTVTGVALGALYPVVNYFI). In terms of domain architecture, Rieske spans 61 to 162 (GNDVSVSKFL…AKTENDKIVL (102 aa)). 4 residues coordinate [2Fe-2S] cluster: Cys108, His110, Cys126, and His129. Residues Cys113 and Cys128 are joined by a disulfide bond.

Belongs to the Rieske iron-sulfur protein family. In terms of assembly, the 4 large subunits of the cytochrome b6-f complex are cytochrome b6, subunit IV (17 kDa polypeptide, PetD), cytochrome f and the Rieske protein, while the 4 small subunits are PetG, PetL, PetM and PetN. The complex functions as a dimer. The cofactor is [2Fe-2S] cluster.

The protein resides in the cellular thylakoid membrane. The enzyme catalyses 2 oxidized [plastocyanin] + a plastoquinol + 2 H(+)(in) = 2 reduced [plastocyanin] + a plastoquinone + 4 H(+)(out). Component of the cytochrome b6-f complex, which mediates electron transfer between photosystem II (PSII) and photosystem I (PSI), cyclic electron flow around PSI, and state transitions. This is Cytochrome b6-f complex iron-sulfur subunit 1 from Trichormus variabilis (strain ATCC 29413 / PCC 7937) (Anabaena variabilis).